The primary structure comprises 2909 residues: Micronemal protein 15 (2909 aa).

Positions 1-29 (MVFRATREPFRLPLVAAFIALFLLKGVTC) are cleaved as a signal peptide. N-linked (GlcNAc...) asparagine glycans are attached at residues Asn-512, Asn-563, Asn-792, Asn-813, Asn-986, Asn-1007, Asn-1057, Asn-1142, Asn-1319, Asn-1395, and Asn-1713. One can recognise a TSP type-1 1 domain in the interval 1755 to 1811 (TAIVGEWGEWSACTGTCFSQWWTPKRTRTRLVLAELSHSQIPSVSETATCLDLPPCG). A disordered region spans residues 1937–2073 (RRKGIMSRRR…RSQARNQTPD (137 aa)). A compositionally biased stretch (polar residues) spans 1967-1977 (SEQSGKASQNG). N-linked (GlcNAc...) asparagine glycosylation occurs at Asn-1976. A compositionally biased stretch (basic residues) spans 1978-1988 (SRRHRASRKQK). Over residues 2004–2016 (GESTLHGTGTNAY) the composition is skewed to polar residues. The segment covering 2049–2065 (KARRARRGAGRFRKSRS) has biased composition (basic residues). Asn-2333 carries N-linked (GlcNAc...) asparagine glycosylation. The TSP type-1 2 domain occupies 2484–2549 (TCDYTEWSEW…EKCDWMPVCP (66 aa)). 3 cysteine pairs are disulfide-bonded: Cys-2485–Cys-2528, Cys-2496–Cys-2500, and Cys-2542–Cys-2548. The disordered stretch occupies residues 2552–2587 (EGEEEDDATGGVEPRGEPIVPPWSPERPTDENNQAM). A glycan (N-linked (GlcNAc...) asparagine) is linked at Asn-2706. The helical transmembrane segment at 2709 to 2729 (TWVICLLLGVGGGICFVLSCV) threads the bilayer. Residues Asn-2751, Asn-2768, and Asn-2793 are each glycosylated (N-linked (GlcNAc...) asparagine). The disordered stretch occupies residues 2759-2846 (ESHKLRRQGN…IGQTSPTQQR (88 aa)). Residues 2801–2815 (PEEEPWQFEDRDEEP) are compositionally biased toward acidic residues. The span at 2837–2846 (IGQTSPTQQR) shows a compositional bias: polar residues.

Component of a complex, at least composed of cysteine repeat modular protein A (CRMPa), cysteine repeat modular protein B (CRMPb), micronemal protein 15 (MIC15) and thrombospondin type 1 domain-containing protein (TSP1).

It is found in the membrane. Required for rhoptry secretion. Plays a role in host cell invasion. In Toxoplasma gondii, this protein is Micronemal protein 15.